The primary structure comprises 455 residues: Asparagine--tRNA ligase (455 aa).

Belongs to the class-II aminoacyl-tRNA synthetase family. As to quaternary structure, homodimer.

It is found in the cytoplasm. The catalysed reaction is tRNA(Asn) + L-asparagine + ATP = L-asparaginyl-tRNA(Asn) + AMP + diphosphate + H(+). This Mycoplasma pneumoniae (strain ATCC 29342 / M129 / Subtype 1) (Mycoplasmoides pneumoniae) protein is Asparagine--tRNA ligase.